Consider the following 249-residue polypeptide: Quinate/shikimate dehydrogenase (249 aa).

2 residues coordinate substrate: K32 and D68. Residues 93-96 (AGGA), 116-119 (NRRD), K166, 193-196 (CVYN), and G216 contribute to the NAD(+) site.

This sequence belongs to the shikimate dehydrogenase family. As to quaternary structure, homodimer.

The catalysed reaction is L-quinate + NAD(+) = 3-dehydroquinate + NADH + H(+). The enzyme catalyses L-quinate + NADP(+) = 3-dehydroquinate + NADPH + H(+). It catalyses the reaction shikimate + NADP(+) = 3-dehydroshikimate + NADPH + H(+). It carries out the reaction shikimate + NAD(+) = 3-dehydroshikimate + NADH + H(+). Its pathway is metabolic intermediate biosynthesis; chorismate biosynthesis; chorismate from D-erythrose 4-phosphate and phosphoenolpyruvate: step 4/7. Its function is as follows. The actual biological function of YdiB remains unclear, nor is it known whether 3-dehydroshikimate or quinate represents the natural substrate. Catalyzes the reversible NAD-dependent reduction of both 3-dehydroshikimate (DHSA) and 3-dehydroquinate to yield shikimate (SA) and quinate, respectively. It can use both NAD or NADP for catalysis, however it has higher catalytic efficiency with NAD. This is Quinate/shikimate dehydrogenase from Shigella flexneri serotype 5b (strain 8401).